We begin with the raw amino-acid sequence, 131 residues long: Small ribosomal subunit protein uS8 (131 aa).

The protein belongs to the universal ribosomal protein uS8 family. In terms of assembly, part of the 30S ribosomal subunit. Contacts proteins S5 and S12.

In terms of biological role, one of the primary rRNA binding proteins, it binds directly to 16S rRNA central domain where it helps coordinate assembly of the platform of the 30S subunit. The sequence is that of Small ribosomal subunit protein uS8 from Burkholderia ambifaria (strain MC40-6).